Reading from the N-terminus, the 396-residue chain is Phosphoglycerate kinase (396 aa).

Residues 21 to 23, Arg36, 59 to 62, Arg119, and Arg156 each bind substrate; these read DFN and HLGK. ATP contacts are provided by residues Lys206, Glu325, and 352-355; that span reads GGDS.

It belongs to the phosphoglycerate kinase family. Monomer.

The protein localises to the cytoplasm. The enzyme catalyses (2R)-3-phosphoglycerate + ATP = (2R)-3-phospho-glyceroyl phosphate + ADP. It functions in the pathway carbohydrate degradation; glycolysis; pyruvate from D-glyceraldehyde 3-phosphate: step 2/5. The polypeptide is Phosphoglycerate kinase (Staphylococcus carnosus (strain TM300)).